Here is a 227-residue protein sequence, read N- to C-terminus: NAD(P)H-quinone oxidoreductase subunit K, chloroplastic (227 aa).

[4Fe-4S] cluster is bound by residues cysteine 43, cysteine 44, cysteine 108, and cysteine 139. Residues arginine 173–tyrosine 192 show a composition bias toward polar residues. A disordered region spans residues arginine 173–proline 201.

Belongs to the complex I 20 kDa subunit family. In terms of assembly, NDH is composed of at least 16 different subunits, 5 of which are encoded in the nucleus. The cofactor is [4Fe-4S] cluster.

It is found in the plastid. It localises to the chloroplast thylakoid membrane. It catalyses the reaction a plastoquinone + NADH + (n+1) H(+)(in) = a plastoquinol + NAD(+) + n H(+)(out). The catalysed reaction is a plastoquinone + NADPH + (n+1) H(+)(in) = a plastoquinol + NADP(+) + n H(+)(out). Its function is as follows. NDH shuttles electrons from NAD(P)H:plastoquinone, via FMN and iron-sulfur (Fe-S) centers, to quinones in the photosynthetic chain and possibly in a chloroplast respiratory chain. The immediate electron acceptor for the enzyme in this species is believed to be plastoquinone. Couples the redox reaction to proton translocation, and thus conserves the redox energy in a proton gradient. This Trachelium caeruleum (Blue throatwort) protein is NAD(P)H-quinone oxidoreductase subunit K, chloroplastic.